The chain runs to 244 residues: Isoprenyl transferase (244 aa).

Asp23 is a catalytic residue. Asp23 serves as a coordination point for Mg(2+). Substrate is bound by residues 24–27, Trp28, Arg36, His40, and 68–70; these read GNGR and STE. The Proton acceptor role is filled by Asn71. Substrate contacts are provided by residues Trp72, Arg74, Arg191, and 197–199; that span reads RMS. Glu210 is a binding site for Mg(2+).

It belongs to the UPP synthase family. Homodimer. Mg(2+) serves as cofactor.

Catalyzes the condensation of isopentenyl diphosphate (IPP) with allylic pyrophosphates generating different type of terpenoids. The sequence is that of Isoprenyl transferase from Lactococcus lactis subsp. lactis (strain IL1403) (Streptococcus lactis).